The primary structure comprises 185 residues: Ribosome-recycling factor (185 aa).

Belongs to the RRF family.

It localises to the cytoplasm. Responsible for the release of ribosomes from messenger RNA at the termination of protein biosynthesis. May increase the efficiency of translation by recycling ribosomes from one round of translation to another. The chain is Ribosome-recycling factor from Pseudomonas aeruginosa (strain LESB58).